The sequence spans 934 residues: Palmitoyltransferase ZDHHC8 (934 aa).

Over 1–9 the chain is Cytoplasmic; the sequence is MPKCDVKTR. A helical membrane pass occupies residues 10–30; it reads YIPATFAWIVLLLTTFLFFFY. The Extracellular segment spans residues 31 to 47; sequence PCQFYVKSHPWVLAYQG. The helical transmembrane segment at 48-68 threads the bilayer; sequence VITFFVLANFTLATFMDPGII. Residues 69–142 are Cytoplasmic-facing; the sequence is PKASPDEDCE…NNCIGRRNYR (74 aa). The 51-residue stretch at 99–149 folds into the DHHC domain; it reads KWCVTCKFYRPPRCSHCSVCNHCIETFDHHCPWVNNCIGRRNYRFFFFFLV. Cysteine 129 serves as the catalytic S-palmitoyl cysteine intermediate. Residues 143–163 traverse the membrane as a helical segment; that stretch reads FFFFFLVSLSIHMLSIFSLCL. At 164-177 the chain is on the extracellular side; it reads VYVLKIMPNIKDTA. The chain crosses the membrane as a helical span at residues 178–198; it reads PIVAIILMGLVTILAIPIFGL. Over 199–934 the chain is Cytoplasmic; that stretch reads TGFHMVLVSR…IYDMNYEISV (736 aa). 6 disordered regions span residues 336 to 440, 506 to 525, 669 to 705, 751 to 780, 835 to 862, and 881 to 934; these read NGYN…GYTS, MASP…RRPD, QRGV…SGIG, QQQQ…TMPQ, PNPM…TPTR, and LEQQ…EISV. Polar residues-rich tracts occupy residues 337–349 and 381–394; these read GYNQ…TLYS and RHNS…QVSD. Gly residues predominate over residues 397 to 411; sequence GLNGSVSTGGGGGGD. A compositionally biased stretch (basic residues) spans 415–429; the sequence is HMRLYHPRHSPHARP. Composition is skewed to low complexity over residues 688–705 and 751–765; these read QQQQ…SGIG and QQQQ…AAAA. Residues 768 to 780 show a composition bias toward polar residues; sequence HRSNPTSPTTMPQ. The segment covering 910–919 has biased composition (polar residues); the sequence is MQSNASNSGT.

It belongs to the DHHC palmitoyltransferase family. ERF2/ZDHHC9 subfamily.

It is found in the golgi apparatus membrane. Its subcellular location is the cell membrane. The enzyme catalyses L-cysteinyl-[protein] + hexadecanoyl-CoA = S-hexadecanoyl-L-cysteinyl-[protein] + CoA. Functionally, palmitoyltransferase that catalyzes the addition of palmitate onto various protein substrates and therefore functions in several unrelated biological processes. Regulates tissue growth possibly by regulating Ras64B protein stability. May regulate CG34450 mRNA levels. The protein is Palmitoyltransferase ZDHHC8 of Drosophila melanogaster (Fruit fly).